Here is a 278-residue protein sequence, read N- to C-terminus: Large ribosomal subunit protein uL24m (278 aa).

The KOW domain maps to Phe-109–Asp-142.

The protein belongs to the universal ribosomal protein uL24 family.

It is found in the mitochondrion. In Caenorhabditis elegans, this protein is Large ribosomal subunit protein uL24m (mrpl-24).